The chain runs to 93 residues: DNA/RNA-binding protein Alba (93 aa).

N6-acetyllysine is present on Lys11.

Belongs to the histone-like Alba family. Acetylated. Acetylation at Lys-11 decreases DNA-binding affinity.

It is found in the cytoplasm. The protein localises to the chromosome. Binds double-stranded DNA tightly but without sequence specificity. Involved in DNA compaction. The sequence is that of DNA/RNA-binding protein Alba from Pyrococcus abyssi (strain GE5 / Orsay).